A 671-amino-acid polypeptide reads, in one-letter code: UvrABC system protein B (671 aa).

The 388-residue stretch at 25–412 (EGIDAGLAHQ…AGRIVEQVVR (388 aa)) folds into the Helicase ATP-binding domain. Residue 38 to 45 (GVTGSGKT) participates in ATP binding. The short motif at 91–114 (YYDYYQPEAYVPSSDTFIEKDASI) is the Beta-hairpin element. The Helicase C-terminal domain occupies 429–582 (QVDDLLSEIH…QIAFNLEHGI (154 aa)). Positions 601-625 (PGSRSKKRKGMAKAAEESARYENEL) are disordered. Basic and acidic residues predominate over residues 614–625 (AAEESARYENEL). Positions 632–667 (NKRIRQLEEKMYQLARDLEFEAAAQMRDEIGKLRER) constitute a UVR domain.

Belongs to the UvrB family. In terms of assembly, forms a heterotetramer with UvrA during the search for lesions. Interacts with UvrC in an incision complex.

The protein resides in the cytoplasm. Functionally, the UvrABC repair system catalyzes the recognition and processing of DNA lesions. A damage recognition complex composed of 2 UvrA and 2 UvrB subunits scans DNA for abnormalities. Upon binding of the UvrA(2)B(2) complex to a putative damaged site, the DNA wraps around one UvrB monomer. DNA wrap is dependent on ATP binding by UvrB and probably causes local melting of the DNA helix, facilitating insertion of UvrB beta-hairpin between the DNA strands. Then UvrB probes one DNA strand for the presence of a lesion. If a lesion is found the UvrA subunits dissociate and the UvrB-DNA preincision complex is formed. This complex is subsequently bound by UvrC and the second UvrB is released. If no lesion is found, the DNA wraps around the other UvrB subunit that will check the other stand for damage. The protein is UvrABC system protein B of Pseudomonas syringae pv. tomato (strain ATCC BAA-871 / DC3000).